The sequence spans 194 residues: Peptide deformylase (194 aa).

A disordered region spans residues 71-93 (DAEPEECGHDHGDGEGAHKHYPV). Residues 76 to 93 (ECGHDHGDGEGAHKHYPV) are compositionally biased toward basic and acidic residues. Residues cysteine 119 and histidine 161 each contribute to the Fe cation site. Residue glutamate 162 is part of the active site. Histidine 165 is a Fe cation binding site.

Belongs to the polypeptide deformylase family. Fe(2+) is required as a cofactor.

The catalysed reaction is N-terminal N-formyl-L-methionyl-[peptide] + H2O = N-terminal L-methionyl-[peptide] + formate. Functionally, removes the formyl group from the N-terminal Met of newly synthesized proteins. Requires at least a dipeptide for an efficient rate of reaction. N-terminal L-methionine is a prerequisite for activity but the enzyme has broad specificity at other positions. The sequence is that of Peptide deformylase from Erythrobacter litoralis (strain HTCC2594).